We begin with the raw amino-acid sequence, 512 residues long: Beta-glucosidase 44 (512 aa).

Positions 1–23 (MRHLSSPPWPLLLLLLLSSFTSG) are cleaved as a signal peptide. An a beta-D-glucoside-binding site is contributed by Gln-58. N-linked (GlcNAc...) asparagine glycosylation is present at Asn-86. Residues His-159 and 204-205 (NE) each bind a beta-D-glucoside. Glu-205 acts as the Proton donor in catalysis. Cys-224 and Cys-231 are joined by a disulfide. N-linked (GlcNAc...) asparagine glycosylation is present at Asn-230. A beta-D-glucoside contacts are provided by Tyr-347 and Glu-419. Glu-419 functions as the Nucleophile in the catalytic mechanism. A glycan (N-linked (GlcNAc...) asparagine) is linked at Asn-427. A beta-D-glucoside-binding positions include Trp-466, 473–474 (EW), and Phe-482.

It belongs to the glycosyl hydrolase 1 family. As to quaternary structure, homodimer.

It is found in the secreted. The catalysed reaction is Hydrolysis of terminal, non-reducing beta-D-glucosyl residues with release of beta-D-glucose.. Its function is as follows. Hydrolyzes p-nitrophenyl beta-D-glucoside, p-nitrophenyl beta-D-mannoside, cellobiose, 4-methylumbelliferyl-beta-D-glucoside, laminarin, amygdalin, esculin and gentiobiose. This Arabidopsis thaliana (Mouse-ear cress) protein is Beta-glucosidase 44.